A 132-amino-acid polypeptide reads, in one-letter code: Replication enhancer protein (132 aa).

This sequence belongs to the geminiviridae replication enhancer protein family. In terms of assembly, homooligomer. Interacts with the replication-associated protein (REP). Interacts with host proliferating cell nuclear antigen (PCNA). Interacts with host retinoblastoma-related protein 1 (RBR1), and may thereby deregulate the host cell cycle. Oligomerization and interaction with PCNA are necessary for optimal replication enhancement.

In terms of biological role, increases viral DNA accumulation. Enhances infectivity and symptom expression. The polypeptide is Replication enhancer protein (Macroptilium lathyroides (Lima bean)).